The primary structure comprises 979 residues: Zinc finger BED domain-containing protein 6 (979 aa).

The segment at 1–89 (MSVCTLSVPV…ILAKKFSKDL (89 aa)) is required for nucleolar localization. A BED-type 1 zinc finger spans residues 130–187 (AKTSIVWHFFHVDPQYTWRAICNLCEKSVSRGKPGSHLGTSTLQRHLQARHSPHWTRA). Zn(2+) contacts are provided by cysteine 151, cysteine 154, histidine 175, and histidine 180. The interval 207 to 232 (PSSGSNGSFEYIPTDPLDDNRMGKKH) is disordered. The segment at 264 to 321 (AKTSAVWNFFYTDPQHISRAVCNICKRSVSRGRPGSHLGTSTLQRHLQATHPIHWAVA) adopts a BED-type 2 zinc-finger fold. Zn(2+) contacts are provided by cysteine 285, cysteine 288, histidine 309, and histidine 314. Residues 333–383 (DEAETERSDLLSDTLHGEKSTGSQDLTAEDLSDSDSDEPMLEVENRSESPI) are disordered. Basic and acidic residues predominate over residues 337-351 (TERSDLLSDTLHGEK). A compositionally biased stretch (acidic residues) spans 359-373 (TAEDLSDSDSDEPML). Serine 381 is subject to Phosphoserine. The segment at 866 to 948 (VVDEYFKEKY…EQLMFLKMNL (83 aa)) is HATC (Hobo-Ac-Tam3) domain.

In terms of tissue distribution, expressed in pancreatic islet cells (at protein level).

It is found in the nucleus. The protein resides in the nucleolus. Its subcellular location is the cytoplasm. Transcriptional repressor which binds to the consensus sequence 5'-GCTCGC-3', transcription regulation may be tissue-specific. Regulates the expression of target genes such as: IGF2, PGAP6/TMEM8, ENHO, and PIANP. Acts as a transcriptional repressor of growth factor IGF2, thereby negatively regulating postnatal growth of muscles and internal organs, especially in females. Negatively regulates myoblast differentiation and myoblast mitochondrial activity via its regulation of IGF2 transcription. Negatively regulates the cell cycle of myoblasts, potentially via transcriptional regulation of the E2F family of transcription factors such as: E2F1 and E2F2. Positively regulates the cell cycle and survival of pancreatic beta cells. Binds to the CDH2 gene and may directly repress CDH2 transcription. Probably by controlling CDH2 expression, regulates pancreatic beta cell adhesion, and formation of cell-to-cell junctions between pancreatic beta cells and neural crest stem cells. May also play a role in embryonic beta cell differentiation. May play a role in insulin sensitivity and glucose clearance. The chain is Zinc finger BED domain-containing protein 6 from Homo sapiens (Human).